The sequence spans 566 residues: Probable cytochrome P450 519D1 (566 aa).

A helical transmembrane segment spans residues 1–21 (MNVFVLTFFICIIYLLFDLIK). Positions 471–491 (FNNNNNNNNNNNNNNSNNKHK) are disordered. Low complexity predominate over residues 472–487 (NNNNNNNNNNNNNNSN). Cys-510 is a heme binding site.

This sequence belongs to the cytochrome P450 family. The cofactor is heme.

Its subcellular location is the membrane. The sequence is that of Probable cytochrome P450 519D1 (cyp519D1) from Dictyostelium discoideum (Social amoeba).